The sequence spans 839 residues: Oligopeptide transporter phomP2 (839 aa).

Residues 1 to 58 (MEADPKVPFTDEMNIQDEHNWESGSWSSSRRSNDSNVTLLSRRSSVEQHEDERQKDSD) are disordered. Residues 23–36 (SGSWSSSRRSNDSN) show a composition bias toward low complexity. N33 and N36 each carry an N-linked (GlcNAc...) asparagine glycan. Residues 44-58 (SSVEQHEDERQKDSD) are compositionally biased toward basic and acidic residues. 6 consecutive transmembrane segments (helical) span residues 105-125 (VWLLSTFWVLAGCSISTVYYF), 177-197 (ALVVIAYWGSSYTAYGLGPLS), 210-230 (PWAITFLVTTQLTGYGLVGLY), 268-288 (VFMAIASAAFVYQWLPSFVFP), 315-335 (GFGLMDFSLDWNYVAFLSPLF), and 345-365 (FVGAALAVWITYPVAYFSDAL). N-linked (GlcNAc...) asparagine glycosylation is found at N386 and N398. 4 consecutive transmembrane segments (helical) span residues 415–435 (AMHFFWGFASASAMVTYAVLF), 478–498 (AWYALLLAVCLCLGTIQLYAG), 505–525 (WGLQLVVAISALFTLPCGMLF), and 585–605 (WELLVAQVYGTLLGPFVNWAV). Over residues 629-646 (QGLGLGQGGGGGGGGGGQ) the composition is skewed to gly residues. Residues 629–654 (QGLGLGQGGGGGGGGGGQQQRAAGAH) form a disordered region. A run of 3 helical transmembrane segments spans residues 665-685 (NFFSSSVIWGVMGPARVFGGG), 697-717 (WLLPSGFAVGAAAVLLLWLIH), and 728-748 (WPLHPAIIFHGASLFPVFPTT). Residue N749 is glycosylated (N-linked (GlcNAc...) asparagine). The helical transmembrane segment at 781-801 (AGLDCGAQLVQMVLGVAFLVF) threads the bilayer.

Belongs to the oligopeptide OPT transporter family.

Its subcellular location is the membrane. In terms of biological role, oligopeptide transporter; part of the gene cluster that mediates the biosynthesis of the phomopsins, a group of hexapeptide mycotoxins which infects lupins and causes lupinosis disease in livestock. The polypeptide is Oligopeptide transporter phomP2 (Diaporthe leptostromiformis (Lupinosis disease fungus)).